The primary structure comprises 154 residues: Protein X (154 aa).

A mitochondrial targeting sequence region spans residues 68–117 (PCALRFTSARRMETTVNAHQFLPKVLHKRTLGLSVMSTTDLEAYFKDCLF).

It belongs to the orthohepadnavirus protein X family. As to quaternary structure, may form homodimer. May interact with host CEBPA, CFLAR, CREB1, DDB1, E4F1, HBXIP, HSPD1/HSP60, NFKBIA, POLR2E and SMAD4. Interacts with host SMC5-SMC6 complex and induces its degradation. Interacts with host TRPC4AP; leading to prevent ubiquitination of TRPC4AP. Interacts with host PLSCR1; this interaction promotes ubiquitination and degradation of HBx and impairs HBx-mediated cell proliferation. Post-translationally, a fraction may be phosphorylated in insect cells and HepG2 cells, a human hepatoblastoma cell line. Phosphorylated in vitro by host protein kinase C or mitogen-activated protein kinase. N-acetylated in insect cells.

It is found in the host cytoplasm. The protein localises to the host nucleus. It localises to the host mitochondrion. Functionally, multifunctional protein that plays a role in silencing host antiviral defenses and promoting viral transcription. Does not seem to be essential for HBV infection. May be directly involved in development of cirrhosis and liver cancer (hepatocellular carcinoma). Most of cytosolic activities involve modulation of cytosolic calcium. The effect on apoptosis is controversial depending on the cell types in which the studies have been conducted. May induce apoptosis by localizing in mitochondria and causing loss of mitochondrial membrane potential. May also modulate apoptosis by binding host CFLAR, a key regulator of the death-inducing signaling complex (DISC). Promotes viral transcription by using the host E3 ubiquitin ligase DDB1 to target the SMC5-SMC6 complex to proteasomal degradation. This host complex would otherwise bind to viral episomal DNA, and prevents its transcription. Moderately stimulates transcription of many different viral and cellular transcription elements. Promoters and enhancers stimulated by HBx contain DNA binding sites for NF-kappa-B, AP-1, AP-2, c-EBP, ATF/CREB, or the calcium-activated factor NF-AT. This Hepatitis B virus genotype D (isolate France/alpha1/1989) (HBV-D) protein is Protein X.